The sequence spans 248 residues: MSFVAIIPARFASTRLPGKPLVDIHGKPMVVHVMERALESGAERVIVATDHIDVAHAVEAAGGEVCMTRADHQSGTERLAEVIDHYQFPDDKVIVNVQGDEPMIPPVIIQQVAKNIAQRSVGMATLAVPVDSVEEAFNPNAVKVVRDAQGNALYFSRATIPWDRERFAVSQDSIGDNFLRHIGIYGYRAGFIRRYVRWEASPLEQIELLEQLRVLWYGEKIHVDVAQAIPSAGVDTAEDLQRVRAAMR.

This sequence belongs to the KdsB family.

Its subcellular location is the cytoplasm. The catalysed reaction is 3-deoxy-alpha-D-manno-oct-2-ulosonate + CTP = CMP-3-deoxy-beta-D-manno-octulosonate + diphosphate. It participates in nucleotide-sugar biosynthesis; CMP-3-deoxy-D-manno-octulosonate biosynthesis; CMP-3-deoxy-D-manno-octulosonate from 3-deoxy-D-manno-octulosonate and CTP: step 1/1. It functions in the pathway bacterial outer membrane biogenesis; lipopolysaccharide biosynthesis. Functionally, activates KDO (a required 8-carbon sugar) for incorporation into bacterial lipopolysaccharide in Gram-negative bacteria. This Erwinia tasmaniensis (strain DSM 17950 / CFBP 7177 / CIP 109463 / NCPPB 4357 / Et1/99) protein is 3-deoxy-manno-octulosonate cytidylyltransferase.